A 141-amino-acid chain; its full sequence is MKTARRRSRELAVQAVYQSLINRTAAPEIAKNIREMPDFAKADEELFNKLFFGTQTNAAEYIRQIRPLLDRDEKDLNPIERAVLLTACHELSAMPETPYPVIINEAIEVTKTFGGTDGHKFVNGILDKLAAQIRPDEPKRR.

This sequence belongs to the NusB family.

Functionally, involved in transcription antitermination. Required for transcription of ribosomal RNA (rRNA) genes. Binds specifically to the boxA antiterminator sequence of the ribosomal RNA (rrn) operons. The chain is Transcription antitermination protein NusB from Neisseria meningitidis serogroup A / serotype 4A (strain DSM 15465 / Z2491).